Here is an 89-residue protein sequence, read N- to C-terminus: Cell division topological specificity factor (89 aa).

Belongs to the MinE family.

In terms of biological role, prevents the cell division inhibition by proteins MinC and MinD at internal division sites while permitting inhibition at polar sites. This ensures cell division at the proper site by restricting the formation of a division septum at the midpoint of the long axis of the cell. The sequence is that of Cell division topological specificity factor from Laribacter hongkongensis (strain HLHK9).